Consider the following 119-residue polypeptide: Large ribosomal subunit protein uL18 (119 aa).

This sequence belongs to the universal ribosomal protein uL18 family. As to quaternary structure, part of the 50S ribosomal subunit; part of the 5S rRNA/L5/L18/L25 subcomplex. Contacts the 5S and 23S rRNAs.

Functionally, this is one of the proteins that bind and probably mediate the attachment of the 5S RNA into the large ribosomal subunit, where it forms part of the central protuberance. The polypeptide is Large ribosomal subunit protein uL18 (Chelativorans sp. (strain BNC1)).